The chain runs to 458 residues: tRNA modification GTPase MnmE (458 aa).

3 residues coordinate (6S)-5-formyl-5,6,7,8-tetrahydrofolate: R26, E88, and R127. A TrmE-type G domain is found at 224–378 (GLSTAIIGRP…IEDRINQLFF (155 aa)). N234 serves as a coordination point for K(+). GTP contacts are provided by residues 234–239 (NVGKSS), 253–259 (TDIAGTT), and 278–281 (DTAG). S238 is a Mg(2+) binding site. T253, I255, and T258 together coordinate K(+). T259 contributes to the Mg(2+) binding site. K458 contacts (6S)-5-formyl-5,6,7,8-tetrahydrofolate.

It belongs to the TRAFAC class TrmE-Era-EngA-EngB-Septin-like GTPase superfamily. TrmE GTPase family. Homodimer. Heterotetramer of two MnmE and two MnmG subunits. K(+) is required as a cofactor.

Its subcellular location is the cytoplasm. Its function is as follows. Exhibits a very high intrinsic GTPase hydrolysis rate. Involved in the addition of a carboxymethylaminomethyl (cmnm) group at the wobble position (U34) of certain tRNAs, forming tRNA-cmnm(5)s(2)U34. This Streptococcus pyogenes serotype M28 (strain MGAS6180) protein is tRNA modification GTPase MnmE.